Consider the following 369-residue polypeptide: Nuclear pore complex-interacting protein family member A2 (369 aa).

Positions 325–346 are disordered; it reads KTPPECLLTPLPPSAPPSADDN.

It belongs to the NPIP family.

This is Nuclear pore complex-interacting protein family member A2 (NPIPA2) from Homo sapiens (Human).